The primary structure comprises 59 residues: MAVQQNKKSPSKRGMHRSHDALTAPALSVDSTTGEVHRPHHISPNGMYRGRKVVKAKGE.

The interval 1-59 is disordered; that stretch reads MAVQQNKKSPSKRGMHRSHDALTAPALSVDSTTGEVHRPHHISPNGMYRGRKVVKAKGE. Over residues 49-59 the composition is skewed to basic residues; the sequence is RGRKVVKAKGE.

It belongs to the bacterial ribosomal protein bL32 family.

In Neisseria meningitidis serogroup B (strain ATCC BAA-335 / MC58), this protein is Large ribosomal subunit protein bL32 (rpmF).